The following is a 118-amino-acid chain: Small ribosomal subunit protein uS13 (118 aa).

Residues 97 to 118 (VRGQRTKTNARTCKGPRKAIKK) form a disordered region.

Belongs to the universal ribosomal protein uS13 family. In terms of assembly, part of the 30S ribosomal subunit. Forms a loose heterodimer with protein S19. Forms two bridges to the 50S subunit in the 70S ribosome.

In terms of biological role, located at the top of the head of the 30S subunit, it contacts several helices of the 16S rRNA. In the 70S ribosome it contacts the 23S rRNA (bridge B1a) and protein L5 of the 50S subunit (bridge B1b), connecting the 2 subunits; these bridges are implicated in subunit movement. Contacts the tRNAs in the A and P-sites. This is Small ribosomal subunit protein uS13 from Buchnera aphidicola subsp. Schizaphis graminum (strain Sg).